Here is a 1551-residue protein sequence, read N- to C-terminus: Serine/threonine-protein kinase MRCK gamma (1551 aa).

A Protein kinase domain is found at 71–337 (FEILKVIGRG…LDDFRNHPFF (267 aa)). ATP-binding positions include 77–85 (IGRGAFGEV) and Lys-100. Asp-195 acts as the Proton acceptor in catalysis. Phosphoserine; by autocatalysis occurs at positions 216 and 228. At Thr-234 the chain carries Phosphothreonine; by autocatalysis. Positions 338–408 (EGVDWERLAS…TSGSHSPESS (71 aa)) constitute an AGC-kinase C-terminal domain. Coiled coils occupy residues 406-678 (ESSS…SNWE) and 730-802 (KARR…RARG). 4 disordered regions span residues 467–486 (KASL…QDSD), 655–675 (ELAQ…ETES), 801–849 (RGPV…PEGR), and 863–886 (TANT…PRSF). The segment covering 655–674 (ELAQEQESKQRLEGERRETE) has biased composition (basic and acidic residues). The span at 835-849 (ATRHGGEPDLRPEGR) shows a compositional bias: basic and acidic residues. The Phorbol-ester/DAG-type zinc finger occupies 878–927 (SHTLRPRSFPSPTKCLRCTSLMLGLGRQGLGCDACGYFCHTTCAPQAPPC). Residues 947–1066 (GTAYEGFLSV…WLQVLGELQR (120 aa)) form the PH domain. Positions 1092 to 1366 (LPHTLCAAIL…RPLNPEGSLF (275 aa)) constitute a CNH domain. Residues 1437 to 1450 (ISPPTNFNHLVHVG) form the CRIB domain. Positions 1442–1551 (NFNHLVHVGP…PLSPELESSP (110 aa)) are disordered. Positions 1457-1470 (GARDKSPAPEEKGR) are enriched in basic and acidic residues. Ser-1482 bears the Phosphoserine mark. Residues 1511–1533 (TSLSSESVSCPQGSLSPATSLMQ) show a composition bias toward polar residues. The segment covering 1540–1551 (SLPLSPELESSP) has biased composition (low complexity).

Belongs to the protein kinase superfamily. AGC Ser/Thr protein kinase family. DMPK subfamily. In terms of assembly, homodimer and homotetramer via the coiled coil regions. Interacts tightly with GTP-bound but not GDP-bound CDC42. Requires Mg(2+) as cofactor. In terms of tissue distribution, expressed in heart and skeletal muscle.

The protein localises to the cytoplasm. It carries out the reaction L-seryl-[protein] + ATP = O-phospho-L-seryl-[protein] + ADP + H(+). It catalyses the reaction L-threonyl-[protein] + ATP = O-phospho-L-threonyl-[protein] + ADP + H(+). Its activity is regulated as follows. Maintained in an inactive, closed conformation by an interaction between the kinase domain and the negative autoregulatory C-terminal coiled-coil region. Agonist binding to the phorbol ester binding site disrupts this, releasing the kinase domain to allow N-terminus-mediated dimerization and kinase activation by transautophosphorylation. In terms of biological role, may act as a downstream effector of CDC42 in cytoskeletal reorganization. Contributes to the actomyosin contractility required for cell invasion, through the regulation of MYPT1 and thus MLC2 phosphorylation. This is Serine/threonine-protein kinase MRCK gamma from Homo sapiens (Human).